Reading from the N-terminus, the 360-residue chain is Aminomethyltransferase (360 aa).

Belongs to the GcvT family. As to quaternary structure, the glycine cleavage system is composed of four proteins: P, T, L and H.

The enzyme catalyses N(6)-[(R)-S(8)-aminomethyldihydrolipoyl]-L-lysyl-[protein] + (6S)-5,6,7,8-tetrahydrofolate = N(6)-[(R)-dihydrolipoyl]-L-lysyl-[protein] + (6R)-5,10-methylene-5,6,7,8-tetrahydrofolate + NH4(+). Its function is as follows. The glycine cleavage system catalyzes the degradation of glycine. This chain is Aminomethyltransferase, found in Legionella pneumophila (strain Corby).